A 343-amino-acid chain; its full sequence is 3-dehydroquinate synthase (343 aa).

NAD(+) contacts are provided by residues 86 to 90 (GALLD), 110 to 111 (TT), K123, and K132. The Zn(2+) site is built by E165, H229, and H243.

The protein belongs to the sugar phosphate cyclases superfamily. Dehydroquinate synthase family. It depends on Co(2+) as a cofactor. Zn(2+) serves as cofactor. NAD(+) is required as a cofactor.

The protein resides in the cytoplasm. It catalyses the reaction 7-phospho-2-dehydro-3-deoxy-D-arabino-heptonate = 3-dehydroquinate + phosphate. Its pathway is metabolic intermediate biosynthesis; chorismate biosynthesis; chorismate from D-erythrose 4-phosphate and phosphoenolpyruvate: step 2/7. Functionally, catalyzes the conversion of 3-deoxy-D-arabino-heptulosonate 7-phosphate (DAHP) to dehydroquinate (DHQ). In Pyrobaculum islandicum (strain DSM 4184 / JCM 9189 / GEO3), this protein is 3-dehydroquinate synthase.